A 389-amino-acid chain; its full sequence is Transaldolase (389 aa).

Residue K136 is the Schiff-base intermediate with substrate of the active site. EF-hand domains are found at residues 330–365 (ALNQAFESIFRTFDLDGDGFITREEWMGTDAVFDAI) and 365–388 (IDLNHDGKITAEELGAGIGAVSKL). Ca(2+) contacts are provided by D343, D345, D347, E354, D366, N368, D370, K372, and E377.

This sequence belongs to the transaldolase family. Type 1 subfamily.

The protein localises to the cytoplasm. It carries out the reaction D-sedoheptulose 7-phosphate + D-glyceraldehyde 3-phosphate = D-erythrose 4-phosphate + beta-D-fructose 6-phosphate. It functions in the pathway carbohydrate degradation; pentose phosphate pathway; D-glyceraldehyde 3-phosphate and beta-D-fructose 6-phosphate from D-ribose 5-phosphate and D-xylulose 5-phosphate (non-oxidative stage): step 2/3. Transaldolase is important for the balance of metabolites in the pentose-phosphate pathway. In Gloeobacter violaceus (strain ATCC 29082 / PCC 7421), this protein is Transaldolase.